Reading from the N-terminus, the 156-residue chain is ATP synthase subunit b (156 aa).

A helical membrane pass occupies residues 7-27; sequence LIGQLIAFAIFVWFCMKYVWP.

Belongs to the ATPase B chain family. F-type ATPases have 2 components, F(1) - the catalytic core - and F(0) - the membrane proton channel. F(1) has five subunits: alpha(3), beta(3), gamma(1), delta(1), epsilon(1). F(0) has three main subunits: a(1), b(2) and c(10-14). The alpha and beta chains form an alternating ring which encloses part of the gamma chain. F(1) is attached to F(0) by a central stalk formed by the gamma and epsilon chains, while a peripheral stalk is formed by the delta and b chains.

Its subcellular location is the cell inner membrane. F(1)F(0) ATP synthase produces ATP from ADP in the presence of a proton or sodium gradient. F-type ATPases consist of two structural domains, F(1) containing the extramembraneous catalytic core and F(0) containing the membrane proton channel, linked together by a central stalk and a peripheral stalk. During catalysis, ATP synthesis in the catalytic domain of F(1) is coupled via a rotary mechanism of the central stalk subunits to proton translocation. Its function is as follows. Component of the F(0) channel, it forms part of the peripheral stalk, linking F(1) to F(0). The chain is ATP synthase subunit b from Histophilus somni (strain 129Pt) (Haemophilus somnus).